The chain runs to 346 residues: Envelope glycoprotein M (346 aa).

At 1–12 (MALSRVDVINMR) the chain is on the intravirion side. A helical membrane pass occupies residues 13–33 (IWVLSIICACLTYVNVTVHLV). At 34–76 (AVHFPNLGFPCAYYEINDMKAINLSIRNDIRSLTPQLYLNPIQ) the chain is on the virion surface side. Residues 77-97 (LICYVVFMDICFFFILVYYIV) traverse the membrane as a helical segment. Over 98–117 (CCVKVFSSEKTPNINQSTRD) the chain is Intravirion. Residues 118–140 (ITWMGDSLSCFQFVLTMDTYQFF) form a helical membrane-spanning segment. The Virion surface portion of the chain corresponds to 141-147 (VTCLSFR). Residues 148-168 (LVTLAAFTYCLFFICFTAFTL) traverse the membrane as a helical segment. The Intravirion portion of the chain corresponds to 169–199 (TMITQYQSSERSFFVLKRIHPKLKGTIKYKT). A helical membrane pass occupies residues 200–220 (IIINMIELMLGFSSMVFAITI). Residues 221-236 (CLGLGNNFYIKSSTVA) are Virion surface-facing. A helical membrane pass occupies residues 237–257 (FASINTFFVMSFVYSLVIELI). Residues 258-263 (LHQYVK) lie on the Intravirion side of the membrane. Residues 264 to 284 (VQFGLHFGILFGILGLTYPIL) form a helical membrane-spanning segment. Over 285–293 (KYDSLFKTE) the chain is Virion surface. Residues 294-314 (WTVKFIVNLAVITIVCLSFII) traverse the membrane as a helical segment. Residues 315–346 (CRLIRFFMRKHHNYKKLPTTVEDLDVLEEANE) lie on the Intravirion side of the membrane.

The protein belongs to the herpesviridae glycoprotein M family. Interacts (via N-terminus) with gN (via N-terminus). The gM-gN heterodimer forms the gCII complex.

It is found in the virion membrane. The protein localises to the host Golgi apparatus. The protein resides in the host trans-Golgi network. Its subcellular location is the host endosome membrane. It localises to the host nucleus inner membrane. In terms of biological role, envelope glycoprotein important for virion assembly and egress. Plays a role in the correct incorporation of gH-gL into virion membrane. Directs the glycoprotein N (gN) to the host trans-Golgi network. In Homo sapiens (Human), this protein is Envelope glycoprotein M.